Consider the following 127-residue polypeptide: ATP synthase epsilon chain (127 aa).

The protein belongs to the ATPase epsilon chain family. In terms of assembly, F-type ATPases have 2 components, CF(1) - the catalytic core - and CF(0) - the membrane proton channel. CF(1) has five subunits: alpha(3), beta(3), gamma(1), delta(1), epsilon(1). CF(0) has three main subunits: a, b and c.

It localises to the cell inner membrane. Produces ATP from ADP in the presence of a proton gradient across the membrane. This chain is ATP synthase epsilon chain, found in Leptospira interrogans serogroup Icterohaemorrhagiae serovar copenhageni (strain Fiocruz L1-130).